A 627-amino-acid chain; its full sequence is uncharacterized protein (627 aa).

Residues 1–32 are Extracellular-facing; that stretch reads MVDDSNYLTPHETALAVVATAMKKARLQLDTL. A helical transmembrane segment spans residues 33–53; sequence LINSILGGVLFSSGSFLLVAV. Topologically, residues 54–66 are cytoplasmic; that stretch reads YSEDPDIVARNPG. A helical transmembrane segment spans residues 67–87; that stretch reads IVNLITGVNFAMGLFYVVMMG. Residues 88–113 are Extracellular-facing; sequence ADLFNSNILFFSVGVLRKAVTIYDLM. Residues 114–134 form a helical membrane-spanning segment; sequence ISWVVSWLGNIAGSLFVSYLF. Residues 135–165 are Cytoplasmic-facing; it reads GHLSGISSQKLWIIGSRQIIEQKVSYSFVQT. A helical membrane pass occupies residues 166-186; it reads FLKGIACNFFVCLAIYLQLMA. The Extracellular segment spans residues 187-192; that stretch reads KPIHVK. A helical transmembrane segment spans residues 193 to 213; sequence FILMSFPIIDFIGIGFTHVVG. Over 214-218 the chain is Cytoplasmic; it reads DMSAS. A helical membrane pass occupies residues 219 to 239; the sequence is FIAMLNGANVSVGKYIWKLLI. Residues 240 to 245 lie on the Extracellular side of the membrane; it reads PASLGN. The chain crosses the membrane as a helical span at residues 246-266; it reads IVGGLFFSAVVPFYLHLVVVE. The Cytoplasmic segment spans residues 267-627; it reads RDRKRLSLPE…FYNRHTSPQL (361 aa). Threonine 305 carries the phosphothreonine modification. Residues 512-537 form a disordered region; the sequence is PPILPRTTQDTFPHNAPASSPAYTDD. Residues 517 to 533 are compositionally biased toward polar residues; that stretch reads RTTQDTFPHNAPASSPA. Serine 546 carries the post-translational modification Phosphoserine. Threonine 588 carries the phosphothreonine modification. The segment covering 605–614 has biased composition (basic and acidic residues); it reads STTRRQKITE. Residues 605-627 form a disordered region; the sequence is STTRRQKITEPKNFYNRHTSPQL.

Belongs to the FNT transporter (TC 1.A.16) family.

The protein localises to the membrane. This is an uncharacterized protein from Saccharomyces cerevisiae (strain ATCC 204508 / S288c) (Baker's yeast).